We begin with the raw amino-acid sequence, 240 residues long: UDP-2,3-diacylglucosamine hydrolase (240 aa).

Aspartate 8, histidine 10, aspartate 41, asparagine 79, and histidine 114 together coordinate Mn(2+). 79–80 (NR) lines the substrate pocket. The substrate site is built by aspartate 122, serine 160, asparagine 164, lysine 167, and histidine 195. Histidine 195 and histidine 197 together coordinate Mn(2+).

This sequence belongs to the LpxH family. Requires Mn(2+) as cofactor.

The protein localises to the cell inner membrane. It catalyses the reaction UDP-2-N,3-O-bis[(3R)-3-hydroxytetradecanoyl]-alpha-D-glucosamine + H2O = 2-N,3-O-bis[(3R)-3-hydroxytetradecanoyl]-alpha-D-glucosaminyl 1-phosphate + UMP + 2 H(+). It participates in glycolipid biosynthesis; lipid IV(A) biosynthesis; lipid IV(A) from (3R)-3-hydroxytetradecanoyl-[acyl-carrier-protein] and UDP-N-acetyl-alpha-D-glucosamine: step 4/6. Its function is as follows. Hydrolyzes the pyrophosphate bond of UDP-2,3-diacylglucosamine to yield 2,3-diacylglucosamine 1-phosphate (lipid X) and UMP by catalyzing the attack of water at the alpha-P atom. Involved in the biosynthesis of lipid A, a phosphorylated glycolipid that anchors the lipopolysaccharide to the outer membrane of the cell. The sequence is that of UDP-2,3-diacylglucosamine hydrolase from Photorhabdus laumondii subsp. laumondii (strain DSM 15139 / CIP 105565 / TT01) (Photorhabdus luminescens subsp. laumondii).